Reading from the N-terminus, the 132-residue chain is Small ribosomal subunit protein uS8 (132 aa).

This sequence belongs to the universal ribosomal protein uS8 family. As to quaternary structure, part of the 30S ribosomal subunit. Contacts proteins S5 and S12.

Its function is as follows. One of the primary rRNA binding proteins, it binds directly to 16S rRNA central domain where it helps coordinate assembly of the platform of the 30S subunit. This chain is Small ribosomal subunit protein uS8, found in Acetivibrio thermocellus (strain ATCC 27405 / DSM 1237 / JCM 9322 / NBRC 103400 / NCIMB 10682 / NRRL B-4536 / VPI 7372) (Clostridium thermocellum).